The chain runs to 225 residues: UPF0173 metal-dependent hydrolase PH1671 (225 aa).

The protein belongs to the UPF0173 family.

In Pyrococcus horikoshii (strain ATCC 700860 / DSM 12428 / JCM 9974 / NBRC 100139 / OT-3), this protein is UPF0173 metal-dependent hydrolase PH1671.